The sequence spans 76 residues: Omega/Kappa-hexatoxin-Hv1h (76 aa).

The signal sequence occupies residues 1–22; sequence MNTATGFIVLLVLATILGGIEA. Positions 23–35 are excised as a propeptide; sequence GESHMRKDAMGRV. 3 disulfide bridges follow: cysteine 40–cysteine 55, cysteine 47–cysteine 60, and cysteine 54–cysteine 74.

Belongs to the neurotoxin 08 (Shiva) family. 02 (omega/kappa toxin) subfamily. In terms of tissue distribution, expressed by the venom gland.

It localises to the secreted. In terms of biological role, toxin that may inhibit ion channels. This is Omega/Kappa-hexatoxin-Hv1h from Hadronyche versuta (Blue mountains funnel-web spider).